The primary structure comprises 1006 residues: Pentatricopeptide repeat-containing protein At1g30610, chloroplastic (1006 aa).

Residues 1–40 (MAVTISTNAFVNASLLDESRNSFWRPLFHQPYYNCRRVVR) constitute a chloroplast transit peptide. 2 disordered regions span residues 180-219 (LSKS…ERGS) and 248-292 (SSVA…IARG). The segment covering 194 to 219 (ESFRKRYSKQEYHRSSDTSRGIERGS) has biased composition (basic and acidic residues). Residues 254 to 263 (WSNSGESSVT) show a composition bias toward polar residues. The span at 265 to 284 (PKDESFRRRYSKQEHHRSSD) shows a compositional bias: basic and acidic residues. 10 PPR repeats span residues 468–502 (TDYT…DRYK), 506–536 (IRII…MLLQ), 542–572 (DMVA…MRSP), 592–626 (DVVV…GQKP), 627–657 (SPVT…MQKS), 661–695 (NALA…GIVG), 759–789 (LVVT…MKKV), 793–827 (NLVT…GNHI), 840–874 (DTYT…GYHF), and 875–909 (NAKR…NRIP).

The protein belongs to the PPR family. P subfamily.

It is found in the plastid. Its subcellular location is the chloroplast. Its function is as follows. May play a role in embryogenesis. In Arabidopsis thaliana (Mouse-ear cress), this protein is Pentatricopeptide repeat-containing protein At1g30610, chloroplastic (EMB2279).